The primary structure comprises 104 residues: Class I hydrophobin 12 (104 aa).

The N-terminal stretch at 1–25 (MFSKATLFFTAAVVIVAAGATPTTS) is a signal peptide. Disulfide bonds link Cys27–Cys85, Cys34–Cys79, Cys35–Cys67, and Cys86–Cys99.

Belongs to the fungal hydrophobin family. As to quaternary structure, self-assembles to form functional amyloid fibrils called rodlets. Self-assembly into fibrillar rodlets occurs spontaneously at hydrophobic:hydrophilic interfaces and the rodlets further associate laterally to form amphipathic monolayers.

The protein localises to the secreted. The protein resides in the cell wall. In terms of biological role, aerial growth, conidiation, and dispersal of filamentous fungi in the environment rely upon a capability of their secreting small amphipathic proteins called hydrophobins (HPBs) with low sequence identity. Class I can self-assemble into an outermost layer of rodlet bundles on aerial cell surfaces, conferring cellular hydrophobicity that supports fungal growth, development and dispersal; whereas Class II form highly ordered films at water-air interfaces through intermolecular interactions but contribute nothing to the rodlet structure. Hydph12 is a class I hydrophobin involved in the formation of mycelium knots. The protein is Class I hydrophobin 12 of Pleurotus ostreatus (strain PC15) (Oyster mushroom).